The chain runs to 346 residues: Lysyl aminopeptidase (346 aa).

2 residues coordinate Zn(2+): histidine 63 and aspartate 177. Glutamate 207 serves as the catalytic Proton acceptor. The Zn(2+) site is built by glutamate 208, aspartate 230, and histidine 314.

In terms of assembly, homotetramer. Zn(2+) serves as cofactor.

It catalyses the reaction Preferentially, release of N-terminal lysine.. Functionally, hydrolyzes di-, tri- and tetrapeptides with a lysine as the N-terminal amino acid and with Gly, Lys, Ala, Phe or Glu in the second position. This chain is Lysyl aminopeptidase, found in Pyrococcus furiosus (strain ATCC 43587 / DSM 3638 / JCM 8422 / Vc1).